A 359-amino-acid polypeptide reads, in one-letter code: tRNA N6-adenosine threonylcarbamoyltransferase (359 aa).

Residues histidine 115 and histidine 119 each contribute to the Fe cation site. Substrate-binding positions include 137–141, aspartate 170, glycine 183, and asparagine 283; that span reads LVSGG. Aspartate 311 is a Fe cation binding site. Residues 328-359 are disordered; the sequence is APDSLDIAPRSRWPLDEKSAPVFGTGRRGAKA.

The protein belongs to the KAE1 / TsaD family. It depends on Fe(2+) as a cofactor.

The protein resides in the cytoplasm. The enzyme catalyses L-threonylcarbamoyladenylate + adenosine(37) in tRNA = N(6)-L-threonylcarbamoyladenosine(37) in tRNA + AMP + H(+). Functionally, required for the formation of a threonylcarbamoyl group on adenosine at position 37 (t(6)A37) in tRNAs that read codons beginning with adenine. Is involved in the transfer of the threonylcarbamoyl moiety of threonylcarbamoyl-AMP (TC-AMP) to the N6 group of A37, together with TsaE and TsaB. TsaD likely plays a direct catalytic role in this reaction. The polypeptide is tRNA N6-adenosine threonylcarbamoyltransferase (Brucella ovis (strain ATCC 25840 / 63/290 / NCTC 10512)).